Reading from the N-terminus, the 367-residue chain is Chorismate synthase (367 aa).

Arg-48 is a binding site for NADP(+). Residues Arg-125–Ser-127, Gly-290, Lys-305–Ser-309, and Arg-333 contribute to the FMN site.

The protein belongs to the chorismate synthase family. As to quaternary structure, homotetramer. Requires FMNH2 as cofactor.

The enzyme catalyses 5-O-(1-carboxyvinyl)-3-phosphoshikimate = chorismate + phosphate. The protein operates within metabolic intermediate biosynthesis; chorismate biosynthesis; chorismate from D-erythrose 4-phosphate and phosphoenolpyruvate: step 7/7. Its function is as follows. Catalyzes the anti-1,4-elimination of the C-3 phosphate and the C-6 proR hydrogen from 5-enolpyruvylshikimate-3-phosphate (EPSP) to yield chorismate, which is the branch point compound that serves as the starting substrate for the three terminal pathways of aromatic amino acid biosynthesis. This reaction introduces a second double bond into the aromatic ring system. The sequence is that of Chorismate synthase from Protochlamydia amoebophila (strain UWE25).